A 275-amino-acid chain; its full sequence is Large ribosomal subunit protein uL2c (275 aa).

Positions 222–258 (GSAMNPVDHPHGGGEGRAPIGRARPVSPWGRPALGAK) are disordered.

It belongs to the universal ribosomal protein uL2 family. As to quaternary structure, part of the 50S ribosomal subunit.

It localises to the plastid. It is found in the chloroplast. The protein is Large ribosomal subunit protein uL2c (rpl2) of Chlorella vulgaris (Green alga).